A 328-amino-acid chain; its full sequence is Ribosomal RNA small subunit methyltransferase H (328 aa).

S-adenosyl-L-methionine contacts are provided by residues 37–39 (GGH), Asp57, Phe83, Asp104, and Gln111.

The protein belongs to the methyltransferase superfamily. RsmH family.

It localises to the cytoplasm. The enzyme catalyses cytidine(1402) in 16S rRNA + S-adenosyl-L-methionine = N(4)-methylcytidine(1402) in 16S rRNA + S-adenosyl-L-homocysteine + H(+). In terms of biological role, specifically methylates the N4 position of cytidine in position 1402 (C1402) of 16S rRNA. The polypeptide is Ribosomal RNA small subunit methyltransferase H (Neisseria meningitidis serogroup A / serotype 4A (strain DSM 15465 / Z2491)).